The chain runs to 153 residues: Putative nuclear shuttle protein (153 aa).

This sequence belongs to the nanoviridae nuclear shuttle protein family.

Its subcellular location is the host nucleus. It is found in the host cytoplasm. In terms of biological role, putative nuclear shuttle protein. In Faba bean necrotic yellows virus (isolate Syrian SV292-88) (FBNYV), this protein is Putative nuclear shuttle protein (DNA-N).